The primary structure comprises 142 residues: Small ribosomal subunit protein uS12 (142 aa).

It belongs to the universal ribosomal protein uS12 family. As to quaternary structure, part of the 30S ribosomal subunit.

Its function is as follows. With S4 and S5 plays an important role in translational accuracy. Located at the interface of the 30S and 50S subunits. This chain is Small ribosomal subunit protein uS12, found in Archaeoglobus fulgidus (strain ATCC 49558 / DSM 4304 / JCM 9628 / NBRC 100126 / VC-16).